A 977-amino-acid polypeptide reads, in one-letter code: Disks large-associated protein 3 (977 aa).

Residues 1-10 (MRGYHGDRGS) are compositionally biased toward basic and acidic residues. Disordered regions lie at residues 1 to 24 (MRGY…QHMD), 52 to 96 (AGLG…MYPG), 137 to 167 (FHTL…ESPS), 181 to 289 (AKSH…CLDA), 398 to 417 (AMGD…SPKA), and 529 to 582 (PGSS…SADG). Residues 53 to 73 (GLGHLSPEGPLSLSEGPSSVG) are compositionally biased toward low complexity. S58 bears the Phosphoserine mark. The segment covering 74–87 (PEGGPGGVGAGGGS) has biased composition (gly residues). Residues 189–201 (PGKRDYNGPKADG) are compositionally biased toward basic and acidic residues. The span at 221–245 (SHHHHHHHHHHHHQSRHGKRSKSKD) shows a compositional bias: basic residues. Positions 258 to 271 (GWWSSDDNLDSDSG) are enriched in low complexity. Residues S404, S407, S410, and S414 each carry the phosphoserine modification. Pro residues predominate over residues 538-547 (APPPIPPGSQ). Phosphoserine occurs at positions 641 and 643. Disordered stretches follow at residues 739–788 (EGYP…RTSP) and 906–939 (EEKK…RQRQ). Basic and acidic residues-rich tracts occupy residues 767-777 (GRRDSWMERGS) and 925-939 (PVKE…RQRQ). 3 positions are modified to phosphoserine: S930, S933, and S965.

This sequence belongs to the SAPAP family. As to quaternary structure, interacts with DLG4/PSD-95. In terms of tissue distribution, highly expressed in central and peripherical nervous system (at protein level).

The protein resides in the cell membrane. The protein localises to the postsynaptic density. It localises to the synapse. Functionally, may play a role in the molecular organization of synapses and neuronal cell signaling. Could be an adapter protein linking ion channel to the subsynaptic cytoskeleton. May induce enrichment of PSD-95/SAP90 at the plasma membrane. This Mus musculus (Mouse) protein is Disks large-associated protein 3 (Dlgap3).